The primary structure comprises 654 residues: Peptide-N(4)-(N-acetyl-beta-glucosaminyl)asparagine amidase (654 aa).

At alanine 2 the chain carries N-acetylalanine. Residues glutamate 30–lysine 91 enclose the PUB domain. Over residues arginine 112–glutamate 123 the composition is skewed to basic and acidic residues. Positions arginine 112 to proline 167 are disordered. The span at serine 124–proline 167 shows a compositional bias: polar residues. At threonine 137 the chain carries Phosphothreonine. Zn(2+) is bound by residues cysteine 250, cysteine 253, cysteine 283, and cysteine 286. The active-site Nucleophile is the cysteine 309. Catalysis depends on residues histidine 336 and aspartate 353. The region spanning glutamate 454 to leucine 654 is the PAW domain.

This sequence belongs to the transglutaminase-like superfamily. PNGase family. As to quaternary structure, component of a complex required to couple retrotranslocation, ubiquitination and deglycosylation composed of NGLY1, SAKS1, AMFR, VCP and RAD23B. Interacts with the proteasome components RAD23B and PSMC1. Interacts with directly with VCP. Interacts with DERL1, bringing it close to the endoplasmic reticulum membrane. Interacts with SAKS1. Zn(2+) serves as cofactor.

It localises to the cytoplasm. The enzyme catalyses Hydrolysis of an N(4)-(acetyl-beta-D-glucosaminyl)asparagine residue in which the glucosamine residue may be further glycosylated, to yield a (substituted) N-acetyl-beta-D-glucosaminylamine and a peptide containing an aspartate residue.. Inhibited by Z-VAD-fmk, a well-known caspase inhibitor, which inhibits enzyme activity through covalent binding of the carbohydrate to the single Cys-306 residue. Specifically deglycosylates the denatured form of N-linked glycoproteins in the cytoplasm and assists their proteasome-mediated degradation. Cleaves the beta-aspartyl-glucosamine (GlcNAc) of the glycan and the amide side chain of Asn, converting Asn to Asp. Prefers proteins containing high-mannose over those bearing complex type oligosaccharides. Can recognize misfolded proteins in the endoplasmic reticulum that are exported to the cytosol to be destroyed and deglycosylate them, while it has no activity toward native proteins. Deglycosylation is a prerequisite for subsequent proteasome-mediated degradation of some, but not all, misfolded glycoproteins. This is Peptide-N(4)-(N-acetyl-beta-glucosaminyl)asparagine amidase (NGLY1) from Macaca fascicularis (Crab-eating macaque).